The primary structure comprises 147 residues: Hemoglobin subunit epsilon-2 (147 aa).

The Globin domain maps to 3–147 (HFTTEENVAV…VANALTHKYH (145 aa)). Heme b contacts are provided by Tyr64 and His93.

This sequence belongs to the globin family. In terms of tissue distribution, red blood cells.

Its function is as follows. Hemoglobin epsilon chain is a beta-type chain found in early embryos. This chain is Hemoglobin subunit epsilon-2 (HBE2), found in Bos taurus (Bovine).